Reading from the N-terminus, the 420-residue chain is Serine hydroxymethyltransferase (420 aa).

(6S)-5,6,7,8-tetrahydrofolate is bound by residues L123 and 127–129 (GHL). Position 232 is an N6-(pyridoxal phosphate)lysine (K232). 357–359 (SPF) lines the (6S)-5,6,7,8-tetrahydrofolate pocket.

It belongs to the SHMT family. Homodimer. Pyridoxal 5'-phosphate is required as a cofactor.

It is found in the cytoplasm. The enzyme catalyses (6R)-5,10-methylene-5,6,7,8-tetrahydrofolate + glycine + H2O = (6S)-5,6,7,8-tetrahydrofolate + L-serine. Its pathway is one-carbon metabolism; tetrahydrofolate interconversion. It participates in amino-acid biosynthesis; glycine biosynthesis; glycine from L-serine: step 1/1. Functionally, catalyzes the reversible interconversion of serine and glycine with tetrahydrofolate (THF) serving as the one-carbon carrier. This reaction serves as the major source of one-carbon groups required for the biosynthesis of purines, thymidylate, methionine, and other important biomolecules. Also exhibits THF-independent aldolase activity toward beta-hydroxyamino acids, producing glycine and aldehydes, via a retro-aldol mechanism. This Streptococcus pyogenes serotype M4 (strain MGAS10750) protein is Serine hydroxymethyltransferase.